Consider the following 301-residue polypeptide: Ubiquinone biosynthesis protein COQ4, mitochondrial (301 aa).

The transit peptide at 1 to 46 (MEVTLKRSAALARQTTPLLRPLRPVATYPSNNNNNNNPTPQQRRPY) directs the protein to the mitochondrion. The interval 14–48 (QTTPLLRPLRPVATYPSNNNNNNNPTPQQRRPYSL) is disordered. A compositionally biased stretch (polar residues) spans 38-48 (PTPQQRRPYSL). Zn(2+) is bound by residues His185, Asp186, His189, and Glu201.

It belongs to the COQ4 family. In terms of assembly, component of a multi-subunit COQ enzyme complex, composed of at least COQ3, COQ4, COQ5, COQ6, COQ7 and COQ9. Requires Zn(2+) as cofactor.

The protein localises to the mitochondrion inner membrane. The enzyme catalyses a 4-hydroxy-3-methoxy-5-(all-trans-polyprenyl)benzoate + H(+) = a 2-methoxy-6-(all-trans-polyprenyl)phenol + CO2. Its pathway is cofactor biosynthesis; ubiquinone biosynthesis. In terms of biological role, lyase that catalyzes the C1-decarboxylation of 4-hydroxy-3-methoxy-5-(all-trans-polyprenyl)benzoic acid into 2-methoxy-6-(all-trans-polyprenyl)phenol during ubiquinone biosynthesis. This Podospora anserina (strain S / ATCC MYA-4624 / DSM 980 / FGSC 10383) (Pleurage anserina) protein is Ubiquinone biosynthesis protein COQ4, mitochondrial.